A 300-amino-acid polypeptide reads, in one-letter code: F-box protein PP2-A15 (300 aa).

The 47-residue stretch at 17–63 folds into the F-box domain; the sequence is MGPGLGDIPESCVACVFMYLTPPEICNLAGLNRSFRGAASSDSVWEK.

The protein is F-box protein PP2-A15 (PP2A15) of Arabidopsis thaliana (Mouse-ear cress).